Consider the following 607-residue polypeptide: UvrABC system protein C (607 aa).

Residues 16–94 (HLPGVYRHLD…IKSLRPRYNI (79 aa)) enclose the GIY-YIG domain. Residues 203–238 (REVMDEIEARMQQASGELRFEEAAVLRDQMGSLSKV) form the UVR domain.

It belongs to the UvrC family. As to quaternary structure, interacts with UvrB in an incision complex.

The protein localises to the cytoplasm. Its function is as follows. The UvrABC repair system catalyzes the recognition and processing of DNA lesions. UvrC both incises the 5' and 3' sides of the lesion. The N-terminal half is responsible for the 3' incision and the C-terminal half is responsible for the 5' incision. The sequence is that of UvrABC system protein C from Bordetella avium (strain 197N).